The sequence spans 365 residues: Peptide chain release factor 2 (365 aa).

The residue at position 251 (Q251) is an N5-methylglutamine.

Belongs to the prokaryotic/mitochondrial release factor family. Post-translationally, methylated by PrmC. Methylation increases the termination efficiency of RF2.

Its subcellular location is the cytoplasm. Peptide chain release factor 2 directs the termination of translation in response to the peptide chain termination codons UGA and UAA. The polypeptide is Peptide chain release factor 2 (Aliarcobacter butzleri (strain RM4018) (Arcobacter butzleri)).